Reading from the N-terminus, the 216-residue chain is ATP synthase subunit C lysine N-methyltransferase (216 aa).

Residue Met-1 is modified to N-acetylmethionine. Over residues 1–12 the composition is skewed to basic and acidic residues; the sequence is MERGETPEEERQ. Residues 1-25 are disordered; sequence MERGETPEEERQSGCVLPTSPESDS. Residues 31-50 form a helical membrane-spanning segment; sequence WGFLITGVIGGALVTVYAVT. Residues 51–85 form a required for mitochondrial location region; that stretch reads TPFIAPALRKVCLPFVPATSRQVENVVKMLQHRRG.

The protein belongs to the ANT/ATPSC lysine N-methyltransferase family.

It is found in the mitochondrion membrane. It carries out the reaction L-lysyl-[protein] + 3 S-adenosyl-L-methionine = N(6),N(6),N(6)-trimethyl-L-lysyl-[protein] + 3 S-adenosyl-L-homocysteine + 3 H(+). In terms of biological role, mitochondrial protein-lysine N-methyltransferase that trimethylates ATP synthase subunit C, ATP5MC1 and ATP5MC2. Trimethylation is required for proper incorporation of the C subunit into the ATP synthase complex and mitochondrial respiration. Promotes chronic pain. Involved in persistent inflammatory and neuropathic pain: methyltransferase activity in the mitochondria of sensory neurons promotes chronic pain via a pathway that depends on the production of reactive oxygen species (ROS) and on the engagement of spinal cord microglia. This is ATP synthase subunit C lysine N-methyltransferase (Atpsckmt) from Rattus norvegicus (Rat).